A 355-amino-acid polypeptide reads, in one-letter code: tRNA pseudouridine synthase D (355 aa).

The Nucleophile role is filled by aspartate 84. One can recognise a TRUD domain in the interval 160-306; the sequence is GVPNYFGLQR…MAHERRILRL (147 aa).

The protein belongs to the pseudouridine synthase TruD family.

The catalysed reaction is uridine(13) in tRNA = pseudouridine(13) in tRNA. Its function is as follows. Responsible for synthesis of pseudouridine from uracil-13 in transfer RNAs. In Pseudomonas aeruginosa (strain ATCC 15692 / DSM 22644 / CIP 104116 / JCM 14847 / LMG 12228 / 1C / PRS 101 / PAO1), this protein is tRNA pseudouridine synthase D.